We begin with the raw amino-acid sequence, 997 residues long: MRLLKYPLEGISGNVTSLVTIDAEYVVVCGSRGDIQVWHQQQLLDTAFDRCTLETLKPKYSFTFELKDDEDELVFAMGDRDCLYLGTEHSVYSYSGWLKALESGHTTLENKLIYTTVSQSIITDVKWDSLLDILFVLTDRPCKIHLFDTRSANKKEITSIALDKNSKPLTGVVDPSGAGTFTVLTSDRSIVVYHINRTGDYKEVKKLSQHVLVYPLHYKITMPPQADFLPIINSLKGSSGAAGSTATVLLNRNENYKVMSTLVPSASSNTKVLVHSPKMYEKANLKRGTISRYNLVATSTNTDGSIMIWNTKRGKPLFAPLNISDSAINDMIWSSNGLTLFAVSNDNVLYTFAFLQDDLGKTVPMEEIENIRQSNIIKEPLPIAYVITASDGLGDISTSKNQGLGVAADNSSNILSTDTNTNEKNLSTVNTTEPQTNSQSSSYNNKPESKLDSSKSEITSADSSDEKAKNLEARPIEAKSKKILNGKNLESKSSSVTTSDNIQKKVEDSKSNVSVTATEKKTKPDKKSIKSENGESKVNKAQNTISPKESNTTDNKSTTPDFKNPSYQVPKDLKRKPKEDALGNAVTKRAKKDLEPVDFLDTGLLLPNVAFSRVRLSTPLIRMNIDCTSSNDSKILLNIRNGSGNEQKPTIVKLLDKTVTPERTLFQDFIPKFVSLATSGDDFWACSSEDGTLYIFNDVGRKIIPPLTIGVPISFLEACGKYLLCVSSIGELYCWNIASSKLEFPVTTIFPLLSPSIRYSDDILTRAENITMCSVTNNGFPIATLSNGDGYMYDKNMETWLLVSDGWWAYGSQYWDSTNNSNLIPDSSTKPTEGQSSTEISKASIVTLLEKKTNNELTRKGRIKNLRRFARTILMKEGFENIEEIVTLSHLENKLLVTLRLEEQHEFKKLIKLYAVKLGELGYVDRLRDLFAWIISDSNDNGDLIPGINRKELVKTLLTACADLRSVQRVTIDYADMLGYLPNDIFFDCESQNDTGK.

WD repeat units lie at residues Gly-10–Phe-48, Val-117–Ala-152, Asn-153–His-194, Val-274–Ala-319, and Ile-323–Thr-362. The tract at residues Ala-408–Asn-584 is disordered. Positions Asp-409–Lys-446 are enriched in polar residues. Basic and acidic residues predominate over residues Ser-464–Ser-480. The segment covering Ser-491 to Asn-501 has biased composition (polar residues). Residues Thr-518 to Val-538 are compositionally biased toward basic and acidic residues. Polar residues predominate over residues Asn-539 to Tyr-567. WD repeat units lie at residues Leu-665–Pro-706 and Thr-708–Pro-745.

This sequence belongs to the WD repeat HIR1 family.

It localises to the nucleus. Its function is as follows. Required for replication-independent chromatin assembly and for the periodic repression of histone gene transcription during the cell cycle. This Candida glabrata (strain ATCC 2001 / BCRC 20586 / JCM 3761 / NBRC 0622 / NRRL Y-65 / CBS 138) (Yeast) protein is Protein HIR2 (HIR2).